We begin with the raw amino-acid sequence, 261 residues long: MKILLTNDDGLYSAGLKAAYDALSELGEVFVVAPAVQRSGVGRSLSIMEPIRVSEVKVNGMRVFAVDGTPTDSVIIGMYEVIGEIPDLAVSGINLGENLSTEAATTSGTVGAALEAATHGSKTIAISLQMPDVSKFELTSKADFSFASKVLRGIAEIVLYKGLPEGVDLLNVNVPAKPNGKIAVTRLARRMYRVSVEKRLDPRGREYYWIYGEETEDAEEGTDIHALRQGYVSITPLKIDLTASVEFDIVEGWFDGLEWEV.

Residues aspartate 8, aspartate 9, serine 39, and asparagine 94 each coordinate a divalent metal cation.

This sequence belongs to the SurE nucleotidase family. The cofactor is a divalent metal cation.

The protein resides in the cytoplasm. The enzyme catalyses a ribonucleoside 5'-phosphate + H2O = a ribonucleoside + phosphate. In terms of biological role, nucleotidase that shows phosphatase activity on nucleoside 5'-monophosphates. The chain is 5'-nucleotidase SurE from Archaeoglobus fulgidus (strain ATCC 49558 / DSM 4304 / JCM 9628 / NBRC 100126 / VC-16).